Reading from the N-terminus, the 209-residue chain is Claudin-like protein ZF-A9 (209 aa).

Helical transmembrane passes span 8–28 (LGTT…AIPL), 81–101 (AILV…FAGG), 114–134 (ALVA…GLVP), and 159–179 (FGAA…GGGL). Positions 187–209 (GRTSSRGRYTPASQNGRERSEYV) are disordered. The span at 188–201 (RTSSRGRYTPASQN) shows a compositional bias: polar residues.

Belongs to the claudin family.

The protein localises to the cell membrane. It is found in the cell junction. Its subcellular location is the tight junction. Component of tight junction (TJ) strands. This is Claudin-like protein ZF-A9 (cldng) from Danio rerio (Zebrafish).